A 432-amino-acid chain; its full sequence is Heme-based aerotactic transducer HemAT (432 aa).

The Methyl-accepting transducer domain occupies 184 to 420 (YNQTRDEQEE…EVSRAVSHVA (237 aa)).

Belongs to the methyl-accepting chemotaxis (MCP) protein family. Homotetramer.

Functionally, heme-containing signal transducer responsible for aerotaxis, the migratory response toward or away from oxygen. The polypeptide is Heme-based aerotactic transducer HemAT (hemAT) (Bacillus subtilis (strain 168)).